Here is a 688-residue protein sequence, read N- to C-terminus: Collagen alpha-2(IX) chain (688 aa).

Residues 1 to 22 (MTAVPAPRSLFVLLQVLWLALA) form the signal peptide. The tract at residues 26–162 (GPPGEPGPPG…PGKPGRPGTI (137 aa)) is triple-helical region 4 (COL4). The tract at residues 26–171 (GPPGEPGPPG…IQGLEGSADF (146 aa)) is disordered. Pro residues-rich tracts occupy residues 28–42 (PGEP…PPGV) and 105–126 (LPGP…PGPV). Over residues 128-137 (LPGEIGTPGP) the composition is skewed to low complexity. Residues 138 to 156 (KGDPGPEGPSGPPGPPGKP) show a composition bias toward pro residues. Pro-159 carries the 4-hydroxyproline modification. The interval 163-179 (QGLEGSADFLCPTNCPA) is nonhelical region 4 (NC4). A glycan (O-linked (Xyl...) (glycosaminoglycan) serine) is linked at Ser-168. The interval 180 to 518 (GVKGPQGLQG…PGRQGVVGRA (339 aa)) is triple-helical region 3 (COL3). Lys-182 is subject to 5-hydroxylysine. O-linked (Gal...) hydroxylysine glycosylation is present at Lys-182. Positions 183–517 (GPQGLQGVKG…QPGRQGVVGR (335 aa)) are disordered. 2 stretches are compositionally biased toward low complexity: residues 289 to 314 (PQGI…PGIP) and 392 to 412 (RGPV…EQGP). A compositionally biased stretch (gly residues) spans 435–444 (GPRGGVGDPG). Over residues 502-517 (DRGVPGQPGRQGVVGR) the composition is skewed to low complexity. The tract at residues 519–548 (ASDQHIVDVVLKMIQEQLAEVAVSAKREAL) is nonhelical region 3 (NC3). The segment at 549–631 (GAAGMVGLPG…PGLPGRPGQA (83 aa)) is triple-helical region 2 (COL2). Residues 553-664 (MVGLPGPPGP…GPVGLPGFCE (112 aa)) are disordered. Basic and acidic residues predominate over residues 598 to 610 (KRGEKGDRGEMGH). A nonhelical region 2 (NC2) region spans residues 632–633 (IN). The segment at 634–663 (GKDGDRGSPGAPGEAGRPGRPGPVGLPGFC) is triple-helical region 1 (COL1). A nonhelical region 1 (NC1) region spans residues 664 to 688 (EPAACLGASAYTSARLTEPGSIKGP).

The protein belongs to the fibril-associated collagens with interrupted helices (FACIT) family. In terms of assembly, heterotrimer of an alpha 1(IX), an alpha 2(IX) and an alpha 3(IX) chain. The chains are linked to each other by interchain disulfide bonds. Trimers are also cross-linked via hydroxylysines. Post-translationally, covalently linked to the telopeptides of type II collagen by lysine-derived cross-links. In terms of processing, prolines at the third position of the tripeptide repeating unit (G-X-Y) are hydroxylated in some or all of the chains.

The protein localises to the secreted. It is found in the extracellular space. It localises to the extracellular matrix. Structural component of hyaline cartilage and vitreous of the eye. The sequence is that of Collagen alpha-2(IX) chain (Col9a2) from Mus musculus (Mouse).